The sequence spans 575 residues: Eukaryotic translation initiation factor 3 subunit D (575 aa).

2 disordered regions span residues 36–66 and 103–177; these read PYSK…YGNR and STRT…DASV. A compositionally biased stretch (basic and acidic residues) spans 39–59; it reads KGDKLGRMADWTEGKDRERGG. Residues 109 to 144 show a composition bias toward gly residues; sequence FGRGGGTVFGRGRGQRGGQAQRGGRGTFQRVGGRGG. Over residues 163–174 the composition is skewed to basic and acidic residues; the sequence is GWRDDKPQRNRD. Residues 302 to 316 form an RNA gate region; the sequence is NLDMVTVNENAADAP.

The protein belongs to the eIF-3 subunit D family. In terms of assembly, component of the eukaryotic translation initiation factor 3 (eIF-3) complex.

It is found in the cytoplasm. MRNA cap-binding component of the eukaryotic translation initiation factor 3 (eIF-3) complex, which is involved in protein synthesis of a specialized repertoire of mRNAs and, together with other initiation factors, stimulates binding of mRNA and methionyl-tRNAi to the 40S ribosome. The eIF-3 complex specifically targets and initiates translation of a subset of mRNAs involved in cell proliferation. In the eIF-3 complex, eif3d specifically recognizes and binds the 7-methylguanosine cap of a subset of mRNAs. The chain is Eukaryotic translation initiation factor 3 subunit D from Phaeosphaeria nodorum (strain SN15 / ATCC MYA-4574 / FGSC 10173) (Glume blotch fungus).